Consider the following 119-residue polypeptide: Holo-[acyl-carrier-protein] synthase (119 aa).

The Mg(2+) site is built by Asp-8 and Glu-59.

Belongs to the P-Pant transferase superfamily. AcpS family. Requires Mg(2+) as cofactor.

The protein resides in the cytoplasm. It catalyses the reaction apo-[ACP] + CoA = holo-[ACP] + adenosine 3',5'-bisphosphate + H(+). Transfers the 4'-phosphopantetheine moiety from coenzyme A to a Ser of acyl-carrier-protein. The sequence is that of Holo-[acyl-carrier-protein] synthase from Lactococcus lactis subsp. lactis (strain IL1403) (Streptococcus lactis).